The sequence spans 89 residues: Small ribosomal subunit protein uS14 (89 aa).

This sequence belongs to the universal ribosomal protein uS14 family. As to quaternary structure, part of the 30S ribosomal subunit. Contacts proteins S3 and S10.

Its function is as follows. Binds 16S rRNA, required for the assembly of 30S particles and may also be responsible for determining the conformation of the 16S rRNA at the A site. The protein is Small ribosomal subunit protein uS14 of Acholeplasma laidlawii (strain PG-8A).